Reading from the N-terminus, the 505-residue chain is ATP synthase subunit alpha (505 aa).

169–176 (GDRKTGKT) lines the ATP pocket.

Belongs to the ATPase alpha/beta chains family. F-type ATPases have 2 components, CF(1) - the catalytic core - and CF(0) - the membrane proton channel. CF(1) has five subunits: alpha(3), beta(3), gamma(1), delta(1), epsilon(1). CF(0) has three main subunits: a(1), b(2) and c(9-12). The alpha and beta chains form an alternating ring which encloses part of the gamma chain. CF(1) is attached to CF(0) by a central stalk formed by the gamma and epsilon chains, while a peripheral stalk is formed by the delta and b chains.

The protein localises to the cell membrane. It carries out the reaction ATP + H2O + 4 H(+)(in) = ADP + phosphate + 5 H(+)(out). Functionally, produces ATP from ADP in the presence of a proton gradient across the membrane. The alpha chain is a regulatory subunit. In Pediococcus pentosaceus (strain ATCC 25745 / CCUG 21536 / LMG 10740 / 183-1w), this protein is ATP synthase subunit alpha.